Here is a 445-residue protein sequence, read N- to C-terminus: Chromosomal replication initiator protein DnaA (445 aa).

A domain I, interacts with DnaA modulators region spans residues 1-73; it reads MSTHLTETWE…VNALKLLTSK (73 aa). Residues 73 to 106 are domain II; that stretch reads KKYNIDFIVTTEEKIEKNHNNEKSNIVVNDEMST. Residues 107-323 are domain III, AAA+ region; the sequence is MLNPKYTFDS…GALIRIVAFS (217 aa). ATP-binding residues include Gly-151, Gly-153, Lys-154, and Thr-155. A domain IV, binds dsDNA region spans residues 324-445; it reads SLTNKEISVD…NDLNKRINQK (122 aa).

The protein belongs to the DnaA family. Oligomerizes as a right-handed, spiral filament on DNA at oriC.

The protein localises to the cytoplasm. Plays an essential role in the initiation and regulation of chromosomal replication. ATP-DnaA binds to the origin of replication (oriC) to initiate formation of the DNA replication initiation complex once per cell cycle. Binds the DnaA box (a 9 base pair repeat at the origin) and separates the double-stranded (ds)DNA. Forms a right-handed helical filament on oriC DNA; dsDNA binds to the exterior of the filament while single-stranded (ss)DNA is stabiized in the filament's interior. The ATP-DnaA-oriC complex binds and stabilizes one strand of the AT-rich DNA unwinding element (DUE), permitting loading of DNA polymerase. After initiation quickly degrades to an ADP-DnaA complex that is not apt for DNA replication. Binds acidic phospholipids. This Clostridium botulinum (strain Loch Maree / Type A3) protein is Chromosomal replication initiator protein DnaA.